Consider the following 124-residue polypeptide: UPF0102 protein Haur_0145 (124 aa).

It belongs to the UPF0102 family.

The polypeptide is UPF0102 protein Haur_0145 (Herpetosiphon aurantiacus (strain ATCC 23779 / DSM 785 / 114-95)).